The following is a 324-amino-acid chain: Meiotic recombination protein DLH1 (324 aa).

Residue 112–119 (GEFRCGKT) participates in ATP binding. Arg-214 serves as a coordination point for dsDNA. SsDNA is bound by residues Arg-214, Tyr-217, Arg-220, Arg-226, and Arg-296. Positions 220 and 226 each coordinate dsDNA.

It belongs to the RecA family. DMC1 subfamily. In terms of assembly, double stacked ring-shaped homooctamer.

The protein resides in the nucleus. In terms of biological role, required for meiotic recombination, synaptonemal complex formation and cell cycle progression. This chain is Meiotic recombination protein DLH1 (DLH1), found in Candida albicans (Yeast).